A 488-amino-acid chain; its full sequence is Malonate-semialdehyde dehydrogenase (488 aa).

Ala150, Phe152, Lys176, Glu179, Arg180, Ser229, and Thr251 together coordinate NAD(+). Cys284 serves as the catalytic Nucleophile. Glu382 lines the NAD(+) pocket.

The protein belongs to the aldehyde dehydrogenase family. IolA subfamily. Homotetramer.

The catalysed reaction is 3-oxopropanoate + NAD(+) + CoA + H2O = hydrogencarbonate + acetyl-CoA + NADH + H(+). It catalyses the reaction 2-methyl-3-oxopropanoate + NAD(+) + CoA + H2O = propanoyl-CoA + hydrogencarbonate + NADH + H(+). It functions in the pathway polyol metabolism; myo-inositol degradation into acetyl-CoA; acetyl-CoA from myo-inositol: step 7/7. Functionally, catalyzes the oxidation of malonate semialdehyde (MSA) and methylmalonate semialdehyde (MMSA) into acetyl-CoA and propanoyl-CoA, respectively. Is involved in a myo-inositol catabolic pathway. Bicarbonate, and not CO2, is the end-product of the enzymatic reaction. This chain is Malonate-semialdehyde dehydrogenase, found in Listeria monocytogenes serovar 1/2a (strain ATCC BAA-679 / EGD-e).